The sequence spans 501 residues: MSLLTLVHILVSFSACVEAISRADFPPGFIFGTASSAYQYEGAVNEGQRGPTIWDTLTKRPGRVIDFSNADVAVDHYHRYKEDVELMNDIGMDAYRFSISWSRIFPNGTGEPNEEGLSYYNSLIDALLDKGIEPYVTLFHWDLPQALEDRYGGWLNSEIIEDFVQYAFTCFKEFGDRVKHWITFNEPYNFAIDGYDLGIQAPGRCSILSHVFCREGKSSTEPYIVAHNILLAHAGAFRAYEQHFKNEQGGLIGIALNSRWYEPFSNADEDTEAAARAMDFELGWFLDPLMFGHYPPSMQKLAGDRLPQFSTHASKLVSGSLDFVGINHYTTLYARNDRLRIRKLVMDDASTDSAVIPTAYRHGKKIGETAASSWLHIVPWGMFKLMKHVKEKYGNPPVVITENGMDDANHPFSRLEDVLQDDKRIQYHNDYMSNLLDAIRKEGCNVHGYFVWSLLDNWEWNSGYTVRFGLYYIDYKNNLTRIPKASVQWFSQVLAQKTAII.

Positions 1-19 (MSLLTLVHILVSFSACVEA) are cleaved as a signal peptide. Gln39 is a binding site for a beta-D-glucoside. An N-linked (GlcNAc...) asparagine glycan is attached at Asn107. A beta-D-glucoside is bound by residues His140 and 185-186 (NE). Glu186 functions as the Proton donor in the catalytic mechanism. Cysteines 205 and 213 form a disulfide. A beta-D-glucoside contacts are provided by residues Tyr329, Glu402, Trp452, 459-460 (EW), and Phe468. Glu402 functions as the Nucleophile in the catalytic mechanism. Asn478 carries N-linked (GlcNAc...) asparagine glycosylation.

It belongs to the glycosyl hydrolase 1 family.

The catalysed reaction is Hydrolysis of terminal, non-reducing beta-D-glucosyl residues with release of beta-D-glucose.. The chain is Beta-glucosidase 25 (BGLU25) from Oryza sativa subsp. japonica (Rice).